The following is a 191-amino-acid chain: NADH-quinone oxidoreductase subunit B (191 aa).

Residues C70, C71, C135, and C165 each coordinate [4Fe-4S] cluster.

The protein belongs to the complex I 20 kDa subunit family. In terms of assembly, NDH-1 is composed of 14 different subunits. Subunits NuoB, C, D, E, F, and G constitute the peripheral sector of the complex. It depends on [4Fe-4S] cluster as a cofactor.

It localises to the cell inner membrane. It catalyses the reaction a quinone + NADH + 5 H(+)(in) = a quinol + NAD(+) + 4 H(+)(out). In terms of biological role, NDH-1 shuttles electrons from NADH, via FMN and iron-sulfur (Fe-S) centers, to quinones in the respiratory chain. The immediate electron acceptor for the enzyme in this species is believed to be ubiquinone. Couples the redox reaction to proton translocation (for every two electrons transferred, four hydrogen ions are translocated across the cytoplasmic membrane), and thus conserves the redox energy in a proton gradient. The sequence is that of NADH-quinone oxidoreductase subunit B from Parvibaculum lavamentivorans (strain DS-1 / DSM 13023 / NCIMB 13966).